Here is a 457-residue protein sequence, read N- to C-terminus: Fibrinogen C domain-containing protein 1 (457 aa).

Residues 1-20 (MGSDRWKNIGGAPQMEDSVQ) form a disordered region. Residues 1-33 (MGSDRWKNIGGAPQMEDSVQDKSQRKGCGYILC) are Cytoplasmic-facing. Residues 34 to 54 (TVLLSVAVLLAVTVTGAVLFM) traverse the membrane as a helical; Signal-anchor for type II membrane protein segment. Residues 55-457 (NHYHAPSTEP…MKIRPQREEN (403 aa)) are Extracellular-facing. The tract at residues 211 to 235 (RPRVKADLQRAPSRSSRPRGCANGS) is disordered. One can recognise a Fibrinogen C-terminal domain in the interval 231–454 (CANGSKPRDC…FTEMKIRPQR (224 aa)). N-linked (GlcNAc...) asparagine glycosylation occurs at N233. Residues C240 and C269 are joined by a disulfide bond. A glycan (N-linked (GlcNAc...) asparagine) is linked at N336. D389 and D391 together coordinate Ca(2+). An intrachain disulfide couples C397 to C410.

In terms of assembly, homotetramer; disulfide-linked.

Its subcellular location is the membrane. Its function is as follows. Acetyl group-binding receptor which shows a calcium-dependent binding to acetylated structures such as chitin, some N-acetylated carbohydrates, and amino acids. The sequence is that of Fibrinogen C domain-containing protein 1 (fibcd1) from Xenopus tropicalis (Western clawed frog).